The chain runs to 547 residues: Chaperonin GroEL 1 (547 aa).

ATP is bound by residues 30–33, Lys-51, 87–91, Gly-415, and Asp-496; these read TLGP and DGTTT.

Belongs to the chaperonin (HSP60) family. Forms a cylinder of 14 subunits composed of two heptameric rings stacked back-to-back. Interacts with the co-chaperonin GroES.

It is found in the cytoplasm. It catalyses the reaction ATP + H2O + a folded polypeptide = ADP + phosphate + an unfolded polypeptide.. Its function is as follows. Together with its co-chaperonin GroES, plays an essential role in assisting protein folding. The GroEL-GroES system forms a nano-cage that allows encapsulation of the non-native substrate proteins and provides a physical environment optimized to promote and accelerate protein folding. The polypeptide is Chaperonin GroEL 1 (Gluconacetobacter diazotrophicus (strain ATCC 49037 / DSM 5601 / CCUG 37298 / CIP 103539 / LMG 7603 / PAl5)).